Consider the following 402-residue polypeptide: Enoyl-[acyl-carrier-protein] reductase [NADH] (402 aa).

Residues 48-53, 74-75, 111-112, and 140-141 each bind NAD(+); these read GASSGY, FE, DA, and LA. Tyrosine 226 is a substrate binding site. Tyrosine 236 functions as the Proton donor in the catalytic mechanism. NAD(+)-binding positions include lysine 245 and 274 to 276; that span reads VVT.

This sequence belongs to the TER reductase family. In terms of assembly, monomer.

It carries out the reaction a 2,3-saturated acyl-[ACP] + NAD(+) = a (2E)-enoyl-[ACP] + NADH + H(+). The protein operates within lipid metabolism; fatty acid biosynthesis. Its function is as follows. Involved in the final reduction of the elongation cycle of fatty acid synthesis (FAS II). Catalyzes the reduction of a carbon-carbon double bond in an enoyl moiety that is covalently linked to an acyl carrier protein (ACP). The sequence is that of Enoyl-[acyl-carrier-protein] reductase [NADH] from Xanthomonas campestris pv. campestris (strain 8004).